The chain runs to 186 residues: Orotate phosphoribosyltransferase (186 aa).

Residues R93, K94, K97, H99, and 119 to 127 (EDVTTTGGS) each bind 5-phospho-alpha-D-ribose 1-diphosphate. T123 and R151 together coordinate orotate.

It belongs to the purine/pyrimidine phosphoribosyltransferase family. PyrE subfamily. Homodimer. It depends on Mg(2+) as a cofactor.

The catalysed reaction is orotidine 5'-phosphate + diphosphate = orotate + 5-phospho-alpha-D-ribose 1-diphosphate. It functions in the pathway pyrimidine metabolism; UMP biosynthesis via de novo pathway; UMP from orotate: step 1/2. Its function is as follows. Catalyzes the transfer of a ribosyl phosphate group from 5-phosphoribose 1-diphosphate to orotate, leading to the formation of orotidine monophosphate (OMP). The protein is Orotate phosphoribosyltransferase of Pyrococcus horikoshii (strain ATCC 700860 / DSM 12428 / JCM 9974 / NBRC 100139 / OT-3).